The primary structure comprises 274 residues: Indole-3-glycerol phosphate synthase (274 aa).

This sequence belongs to the TrpC family.

It catalyses the reaction 1-(2-carboxyphenylamino)-1-deoxy-D-ribulose 5-phosphate + H(+) = (1S,2R)-1-C-(indol-3-yl)glycerol 3-phosphate + CO2 + H2O. Its pathway is amino-acid biosynthesis; L-tryptophan biosynthesis; L-tryptophan from chorismate: step 4/5. The polypeptide is Indole-3-glycerol phosphate synthase (Kineococcus radiotolerans (strain ATCC BAA-149 / DSM 14245 / SRS30216)).